Consider the following 266-residue polypeptide: Apolipoprotein A-I (266 aa).

Residues 1 to 18 form the signal peptide; sequence MKAVVLTLAVLFLTGSQA. Repeat copies occupy residues 67–88 and 89–110. Residues 67–266 are 10 X approximate tandem repeats; sequence LKLLDNWDSL…DEATKKLNSQ (200 aa). Position 109 is a methionine sulfoxide (M109). The stretch at 111–121 is one 3; half-length repeat; sequence KDLEEVKKKVQ. 5 consecutive repeat copies span residues 122-143, 144-165, 166-187, 188-209, and 210-231. A 9; half-length repeat occupies 232-242; the sequence is PALEDLRQGLL. Repeat 10 spans residues 243–266; sequence PVLENFRDSLLAAVDEATKKLNSQ.

Belongs to the apolipoprotein A1/A4/E family. Homodimer. Interacts with APOA1BP and CLU. Component of a sperm activating protein complex (SPAP), consisting of APOA1, an immunoglobulin heavy chain, an immunoglobulin light chain and albumin. Interacts with NDRG1. Interacts with SCGB3A2. Interacts with NAXE and YJEFN3. Post-translationally, glycosylated. In terms of processing, palmitoylated. Phosphorylation sites are present in the extracellular medium.

The protein resides in the secreted. Functionally, participates in the reverse transport of cholesterol from tissues to the liver for excretion by promoting cholesterol efflux from tissues and by acting as a cofactor for the lecithin cholesterol acyltransferase (LCAT). As part of the SPAP complex, activates spermatozoa motility. The protein is Apolipoprotein A-I (APOA1) of Neomonachus schauinslandi (Hawaiian monk seal).